We begin with the raw amino-acid sequence, 359 residues long: Stearoyl-CoA desaturase (359 aa).

Residues 1-72 lie on the Cytoplasmic side of the membrane; sequence MPAHLLQEEI…EGPKPKLEYV (72 aa). The chain crosses the membrane as a helical span at residues 73–93; the sequence is WRNIILMGLLHLGALYGITLI. Residue Asn-75 participates in substrate binding. Residues 94–97 lie on the Lumenal side of the membrane; the sequence is PTCK. The helical transmembrane segment at 98–118 threads the bilayer; it reads IYTFLWVLFYYMMSALGITAG. The Cytoplasmic segment spans residues 119-217; the sequence is VHRLWSHRTY…EKLVMFQRRY (99 aa). Residues His-120 and His-125 each contribute to the Fe cation site. Positions 120-125 match the Histidine box-1 motif; that stretch reads HRLWSH. Asn-148, Arg-155, and Asp-156 together coordinate substrate. 3 residues coordinate Fe cation: His-157, His-160, and His-161. A Histidine box-2 motif is present at residues 157-161; it reads HRAHH. The substrate site is built by Arg-188 and Lys-189. Phosphoserine is present on Ser-203. Residues 218-237 traverse the membrane as a helical segment; that stretch reads YKPGVLLLCFILPTLVPWYL. The Lumenal portion of the chain corresponds to 238–241; it reads WGET. The chain crosses the membrane as a helical span at residues 242–263; the sequence is FQNSLFFATLLRYAVVLNATWL. Trp-262 provides a ligand contact to substrate. Topologically, residues 264-359 are cytoplasmic; that stretch reads VNSAAHMYGY…RTGEESCKSG (96 aa). Positions 269, 298, 301, and 302 each coordinate Fe cation. The Histidine box-3 signature appears at 298–302; that stretch reads HNYHH.

Belongs to the fatty acid desaturase type 1 family. Requires Fe(2+) as cofactor.

The protein resides in the endoplasmic reticulum membrane. The catalysed reaction is octadecanoyl-CoA + 2 Fe(II)-[cytochrome b5] + O2 + 2 H(+) = (9Z)-octadecenoyl-CoA + 2 Fe(III)-[cytochrome b5] + 2 H2O. It catalyses the reaction hexadecanoyl-CoA + 2 Fe(II)-[cytochrome b5] + O2 + 2 H(+) = (9Z)-hexadecenoyl-CoA + 2 Fe(III)-[cytochrome b5] + 2 H2O. Functionally, stearoyl-CoA desaturase that utilizes O(2) and electrons from reduced cytochrome b5 to introduce the first double bond into saturated fatty acyl-CoA substrates. Catalyzes the insertion of a cis double bond at the delta-9 position into fatty acyl-CoA substrates including palmitoyl-CoA and stearoyl-CoA. Gives rise to a mixture of 16:1 and 18:1 unsaturated fatty acids. Plays an important role in lipid biosynthesis. Plays an important role in regulating the expression of genes that are involved in lipogenesis and in regulating mitochondrial fatty acid oxidation. Plays an important role in body energy homeostasis. Contributes to the biosynthesis of membrane phospholipids, cholesterol esters and triglycerides. The protein is Stearoyl-CoA desaturase (SCD) of Capra hircus (Goat).